Here is a 728-residue protein sequence, read N- to C-terminus: FYN-binding protein 2 (728 aa).

3 disordered regions span residues 17-76 (QNLD…PLQP), 250-287 (QAPE…RPPI), and 367-390 (PGKN…EKQP). A compositionally biased stretch (polar residues) spans 42–75 (GTQSTQILANGKPLSSNHKQRTPYCSSSESQPLQ). Residues 276 to 285 (GPPPPKPSRP) are compositionally biased toward pro residues. Positions 377–390 (SAKHEDKKMKEKQP) are enriched in basic and acidic residues. A Phosphotyrosine modification is found at Tyr491. The SH2-binding; to LCP2 motif lies at 521-524 (YEDV). Position 587 is a phosphotyrosine (Tyr587). Residues 664–724 (IVINTAVACS…LIEHLDFKHQ (61 aa)) form the SH3 domain.

Interacts with SKAP1, LCK and FYN. The phosphorylated form interacts with LCP2. In terms of processing, phosphorylation is required for its function in T-cell activation. In terms of tissue distribution, expressed in T-cells (at protein level). Widely expressed.

It is found in the membrane raft. Functionally, adapter protein that plays a role in T-cell receptor (TCR)-mediated activation of signaling pathways. Required for T-cell activation and integrin-mediated T-cell adhesion in response to TCR stimulation. In Homo sapiens (Human), this protein is FYN-binding protein 2.